We begin with the raw amino-acid sequence, 856 residues long: Centrosomal protein of 97 kDa (856 aa).

LRR repeat units follow at residues 37–58, 59–80, 81–102, 103–124, 125–146, 147–168, 171–192, and 196–205; these read DVHTLILDKNQIIKLENLEKCK, QLIQLSVANNRLVRMMGVAKLT, QLRVLNLPHNSIGCVEGLKDLV, HLEWLNLAGNNLKTMEQVNSCT, ALQHLDLSDNNIPQIGDVSKLI, SLKTLLLHGNIITSLRMAPAYL, NLSILSLAENEIRDLNEISFLA, and ELEQLSIMNN. The 39-residue stretch at 211–249 folds into the LRRCT domain; sequence TPSIPGFDYRPFIVSWCLNLRVLDGYVISQKESLKAEWL. The interval 300–742 is CCP110-binding; sequence HQRQLMSQSQ…KCVKDRDSEA (443 aa). A phosphoserine mark is found at serine 308 and serine 410. Residues 430-451 are disordered; that stretch reads DDGADEFTKGLENQDEDKDKEK. Serine 497 bears the Phosphoserine mark. The span at 498–513 shows a compositional bias: polar residues; that stretch reads LTSLPESAGHSASRTE. The tract at residues 498–525 is disordered; the sequence is LTSLPESAGHSASRTEANSEEAMSPATS. Serine 521 is subject to Phosphoserine. A Phosphothreonine modification is found at threonine 534. One can recognise an IQ domain in the interval 550-579; it reads LNAAATKLQACWRGFYTRNYNQQAKGVRYE. The segment at 579–853 is interaction with MPHOSPH9; sequence EIRLRRMQEH…FQGLHVGVTV (275 aa). Disordered stretches follow at residues 646 to 672 and 737 to 840; these read PPISSTLASPKPPLFPHHQDPSSDQSS and DRDS…PPEC. Residues 737-752 are compositionally biased toward basic and acidic residues; it reads DRDSEATAEEHSDCSR. Polar residues predominate over residues 753–773; it reads ESSASEQDNTLLQQYLTSVQQ. The residue at position 755 (serine 755) is a Phosphoserine. A compositionally biased stretch (acidic residues) spans 776–787; the sequence is DAAEAADSDDVA. Residues 799 to 811 show a composition bias toward basic and acidic residues; that stretch reads ERFDASSDSETHR. The segment covering 812–833 has biased composition (polar residues); sequence VASTSQDEISQTPENCQLNEEA.

As to quaternary structure, interacts with CALM1, CEP76, KIF24 and TALPID3. Interacts with CCP110. ENKD1 competes with CEP97 for binding to CCP110, destabilizing the interaction between CP110 and CEP97 which promotes the removal of CCP110 and CEP97 from the mother centriole and allows the initiation of ciliogenesis. Via its interaction with CCP110, may indirectly interact with HERC2 and NEURL4. Interacts with MPHOSPH9.

The protein localises to the cytoplasm. The protein resides in the cytoskeleton. Its subcellular location is the microtubule organizing center. It is found in the centrosome. It localises to the centriole. In terms of biological role, acts as a key negative regulator of ciliogenesis in collaboration with CCP110 by capping the mother centriole thereby preventing cilia formation. Required for recruitment of CCP110 to the centrosome. In Mus musculus (Mouse), this protein is Centrosomal protein of 97 kDa (Cep97).